The chain runs to 120 residues: Large ribosomal subunit protein eL18 (120 aa).

Belongs to the eukaryotic ribosomal protein eL18 family.

This chain is Large ribosomal subunit protein eL18, found in Pyrococcus abyssi (strain GE5 / Orsay).